A 72-amino-acid chain; its full sequence is Phaiodotoxin-2 (72 aa).

Residues 1–72 enclose the LCN-type CS-alpha/beta domain; it reads KFIRHKDESF…CFGALESKCA (72 aa). 4 cysteine pairs are disulfide-bonded: cysteine 13–cysteine 38, cysteine 23–cysteine 50, cysteine 27–cysteine 52, and cysteine 63–cysteine 71.

The protein belongs to the long (4 C-C) scorpion toxin superfamily. Sodium channel inhibitor family. In terms of tissue distribution, expressed by the venom gland.

Its subcellular location is the secreted. Sodium channel (Nav) specific neurotoxin. This chain is Phaiodotoxin-2, found in Anuroctonus phaiodactylus (Mafia scorpion).